Reading from the N-terminus, the 317-residue chain is Acetylglutamate kinase (317 aa).

Substrate contacts are provided by residues 70–71, Arg-92, and Asn-191; that span reads GG.

It belongs to the acetylglutamate kinase family. ArgB subfamily.

It is found in the cytoplasm. The enzyme catalyses N-acetyl-L-glutamate + ATP = N-acetyl-L-glutamyl 5-phosphate + ADP. Its pathway is amino-acid biosynthesis; L-arginine biosynthesis; N(2)-acetyl-L-ornithine from L-glutamate: step 2/4. Catalyzes the ATP-dependent phosphorylation of N-acetyl-L-glutamate. The polypeptide is Acetylglutamate kinase (Corynebacterium glutamicum (strain R)).